Reading from the N-terminus, the 362-residue chain is Very-long-chain (3R)-3-hydroxyacyl-CoA dehydratase 3 (362 aa).

Met-1 carries the N-acetylmethionine modification. Over 1-149 the chain is Cytoplasmic; that stretch reads MENQVLTPHV…ETLTNLRKGY (149 aa). In terms of domain architecture, CS spans 5–94; it reads VLTPHVYWAQ…KVSQWWERLT (90 aa). Thr-7 bears the Phosphothreonine mark. Positions 111–136 form a coiled coil; it reads LDESDAEMELRAKEEERLNKLRLESE. Residues Ser-114 and Ser-135 each carry the phosphoserine modification. A helical membrane pass occupies residues 150 to 170; it reads LFMYNLVQFLGFSWIFVNLTV. The Lumenal portion of the chain corresponds to 171–185; the sequence is RFCILGKESFYDTFH. Residues 186–207 traverse the membrane as a helical segment; that stretch reads TVADMMYFCQMLAVVETINAAI. Topologically, residues 208–217 are cytoplasmic; it reads GVTTSPVLPS. The chain crosses the membrane as a helical span at residues 218–235; that stretch reads LIQLLGRNFILFIIFGTM. The Lumenal segment spans residues 236–241; sequence EEMQNK. The helical transmembrane segment at 242-256 threads the bilayer; the sequence is AVVFFVFYLWSAIEI. The Cytoplasmic segment spans residues 257 to 279; the sequence is FRYSFYMLTCIDMDWKVLTWLRY. Residues 280–298 form a helical membrane-spanning segment; sequence TLWIPLYPLGCLAEAVSVI. Catalysis depends on residues Tyr-286 and Glu-293. The Lumenal portion of the chain corresponds to 299 to 322; the sequence is QSIPIFNETGRFSFTLPYPVKIKV. A helical transmembrane segment spans residues 323–343; that stretch reads RFSFFLQIYLIMIFLGLYINF. At 344–362 the chain is on the cytoplasmic side; sequence RHLYKQRRRRYGQKKKKIH.

It belongs to the very long-chain fatty acids dehydratase HACD family. May interact with enzymes of the ELO family (including ELOVL1); with those enzymes that mediate condensation, the first of the four steps of the reaction cycle responsible for fatty acids elongation, may be part of a larger fatty acids elongase complex. Interacts with RAC1. Associates with internalized insulin receptor/INSR complexes on Golgi/endosomal membranes; HACD3/PTPLAD1 together with ATIC and PRKAA2/AMPK2 is proposed to be part of a signaling network regulating INSR autophosphorylation and endocytosis. In terms of tissue distribution, highly expressed in testis, kidney, brain, liver and weakly in skeletal muscle, spleen and heart. No expression detected in leukocytes.

It is found in the endoplasmic reticulum membrane. The catalysed reaction is a very-long-chain (3R)-3-hydroxyacyl-CoA = a very-long-chain (2E)-enoyl-CoA + H2O. It carries out the reaction (3R)-hydroxyhexadecanoyl-CoA = (2E)-hexadecenoyl-CoA + H2O. It participates in lipid metabolism; fatty acid biosynthesis. Its function is as follows. Catalyzes the third of the four reactions of the long-chain fatty acids elongation cycle. This endoplasmic reticulum-bound enzymatic process, allows the addition of two carbons to the chain of long- and very long-chain fatty acids/VLCFAs per cycle. This enzyme catalyzes the dehydration of the 3-hydroxyacyl-CoA intermediate into trans-2,3-enoyl-CoA, within each cycle of fatty acid elongation. Thereby, it participates in the production of VLCFAs of different chain lengths that are involved in multiple biological processes as precursors of membrane lipids and lipid mediators. May be involved in Rac1-signaling pathways leading to the modulation of gene expression. Promotes insulin receptor/INSR autophosphorylation and is involved in INSR internalization. In Homo sapiens (Human), this protein is Very-long-chain (3R)-3-hydroxyacyl-CoA dehydratase 3.